A 74-amino-acid chain; its full sequence is Conotoxin Vc6.11 (74 aa).

The signal sequence occupies residues 1-19 (MEKLTILLLVAAVLMSTQA). Positions 20–41 (LIQEQRQKAKINLFSKRKPSAE) are excised as a propeptide. 2 disulfides stabilise this stretch: C55–C66 and C61–C71.

It belongs to the conotoxin O2 superfamily. As to expression, expressed by the venom duct.

Its subcellular location is the secreted. Inhibits voltage-gated ion channels. This is Conotoxin Vc6.11 from Conus victoriae (Queen Victoria cone).